We begin with the raw amino-acid sequence, 330 residues long: Aspartate--ammonia ligase (330 aa).

This sequence belongs to the class-II aminoacyl-tRNA synthetase family. AsnA subfamily.

It localises to the cytoplasm. The enzyme catalyses L-aspartate + NH4(+) + ATP = L-asparagine + AMP + diphosphate + H(+). It participates in amino-acid biosynthesis; L-asparagine biosynthesis; L-asparagine from L-aspartate (ammonia route): step 1/1. The polypeptide is Aspartate--ammonia ligase (Histophilus somni (strain 2336) (Haemophilus somnus)).